We begin with the raw amino-acid sequence, 292 residues long: Homoserine kinase (292 aa).

84–94 (PLARGMGSSSA) lines the ATP pocket.

The protein belongs to the GHMP kinase family. Homoserine kinase subfamily.

It localises to the cytoplasm. It carries out the reaction L-homoserine + ATP = O-phospho-L-homoserine + ADP + H(+). Its pathway is amino-acid biosynthesis; L-threonine biosynthesis; L-threonine from L-aspartate: step 4/5. In terms of biological role, catalyzes the ATP-dependent phosphorylation of L-homoserine to L-homoserine phosphate. The sequence is that of Homoserine kinase from Campylobacter lari (strain RM2100 / D67 / ATCC BAA-1060).